The primary structure comprises 78 residues: Large ribosomal subunit protein eL38 (78 aa).

This sequence belongs to the eukaryotic ribosomal protein eL38 family. In terms of assembly, component of the large ribosomal subunit. Mature ribosomes consist of a small (40S) and a large (60S) subunit. The 40S subunit contains about 32 different proteins and 1 molecule of RNA (18S). The 60S subunit contains 45 different proteins and 3 molecules of RNA (25S, 5.8S and 5S).

The protein resides in the cytoplasm. Its function is as follows. Component of the ribosome, a large ribonucleoprotein complex responsible for the synthesis of proteins in the cell. The small ribosomal subunit (SSU) binds messenger RNAs (mRNAs) and translates the encoded message by selecting cognate aminoacyl-transfer RNA (tRNA) molecules. The large subunit (LSU) contains the ribosomal catalytic site termed the peptidyl transferase center (PTC), which catalyzes the formation of peptide bonds, thereby polymerizing the amino acids delivered by tRNAs into a polypeptide chain. The nascent polypeptides leave the ribosome through a tunnel in the LSU and interact with protein factors that function in enzymatic processing, targeting, and the membrane insertion of nascent chains at the exit of the ribosomal tunnel. This Candida albicans (strain SC5314 / ATCC MYA-2876) (Yeast) protein is Large ribosomal subunit protein eL38.